The sequence spans 428 residues: Glial fibrillary acidic protein (428 aa).

The tract at residues 1-68 is head; the sequence is MERRRVTSAT…KETRASERAE (68 aa). Threonine 7 is subject to Phosphothreonine; by AURKB and ROCK1. Omega-N-methylarginine is present on arginine 12. Serine 13 carries the post-translational modification Phosphoserine; by AURKB and ROCK1. A citrulline mark is found at arginine 26 and arginine 32. Phosphoserine; by AURKB and ROCK1 is present on serine 34. An IF rod domain is found at 65-373; that stretch reads ERAEMMELND…KLLEGEENRI (309 aa). A coil 1A region spans residues 69–100; that stretch reads MMELNDRFASYIEKVRFLEQQNKALAAELNQL. Residue serine 78 is modified to Phosphoserine. The linker 1 stretch occupies residues 101-111; it reads RAKEPTKLADV. A phosphothreonine mark is found at threonine 106 and threonine 146. The coil 1B stretch occupies residues 112–210; sequence YQAELRELRL…EEEVRELQEQ (99 aa). Residues 211-226 are linker 12; sequence LAQQQVHVEMDVAKPD. The segment at 227-248 is coil 2A; it reads LTAALREIRTQYEAVASSNMHE. A linker 2 region spans residues 249–252; the sequence is AEEW. Residues 253–373 form a coil 2B region; it reads YRSKFADLND…KLLEGEENRI (121 aa). Arginine 266 is subject to Citrulline. Residue serine 319 is modified to Phosphoserine. The interval 374–428 is tail; sequence TIPVQTFSNLQIRETSLDTKSVSEGHLKRNIVVKTVEMRDGEVIKESKQEHKDVM. Threonine 379 is subject to Phosphothreonine. Residue serine 381 is modified to Phosphoserine. Residues arginine 402 and arginine 412 each carry the citrulline modification.

The protein belongs to the intermediate filament family. Interacts with SYNM. Phosphorylated by PKN1.

It localises to the cytoplasm. Functionally, GFAP, a class-III intermediate filament, is a cell-specific marker that, during the development of the central nervous system, distinguishes astrocytes from other glial cells. This is Glial fibrillary acidic protein (GFAP) from Bos taurus (Bovine).